We begin with the raw amino-acid sequence, 550 residues long: Glucose-6-phosphate isomerase 1 (550 aa).

Residue glutamate 353 is the Proton donor of the active site. Active-site residues include histidine 384 and lysine 512.

This sequence belongs to the GPI family.

It is found in the cytoplasm. The enzyme catalyses alpha-D-glucose 6-phosphate = beta-D-fructose 6-phosphate. Its pathway is carbohydrate biosynthesis; gluconeogenesis. It participates in carbohydrate degradation; glycolysis; D-glyceraldehyde 3-phosphate and glycerone phosphate from D-glucose: step 2/4. Catalyzes the reversible isomerization of glucose-6-phosphate to fructose-6-phosphate. The protein is Glucose-6-phosphate isomerase 1 of Thiobacillus denitrificans (strain ATCC 25259 / T1).